The sequence spans 760 residues: BMP/retinoic acid-inducible neural-specific protein 1 (760 aa).

Positions 1–16 (MNWRFVELLYFLFVWG) are cleaved as a signal peptide. The region spanning 68-251 (RYKIYREFAR…FVQSALSYIM (184 aa)) is the MACPF domain. N-linked (GlcNAc...) asparagine glycans are attached at residues Asn156, Asn433, Asn443, Asn553, Asn599, Asn630, and Asn676.

It belongs to the BRINP family.

The protein resides in the cytoplasm. Its function is as follows. Plays a role in neurogenesis and brain development. May suppress cell cycle progression in postmitotic neurons by inhibiting G1/S transition. The sequence is that of BMP/retinoic acid-inducible neural-specific protein 1 (Brinp1) from Rattus norvegicus (Rat).